Reading from the N-terminus, the 271-residue chain is Elongation factor Ts (271 aa).

The involved in Mg(2+) ion dislocation from EF-Tu stretch occupies residues 76 to 79; sequence TDFV.

This sequence belongs to the EF-Ts family.

Its subcellular location is the cytoplasm. Functionally, associates with the EF-Tu.GDP complex and induces the exchange of GDP to GTP. It remains bound to the aminoacyl-tRNA.EF-Tu.GTP complex up to the GTP hydrolysis stage on the ribosome. This is Elongation factor Ts from Mycobacterium tuberculosis (strain ATCC 25177 / H37Ra).